We begin with the raw amino-acid sequence, 208 residues long: Uracil phosphoribosyltransferase (208 aa).

5-phospho-alpha-D-ribose 1-diphosphate is bound by residues arginine 78, arginine 103, and 130–138 (DPMLATGGS). Uracil-binding positions include isoleucine 193 and 198–200 (GDA). Aspartate 199 is a 5-phospho-alpha-D-ribose 1-diphosphate binding site.

The protein belongs to the UPRTase family. Mg(2+) serves as cofactor.

The enzyme catalyses UMP + diphosphate = 5-phospho-alpha-D-ribose 1-diphosphate + uracil. The protein operates within pyrimidine metabolism; UMP biosynthesis via salvage pathway; UMP from uracil: step 1/1. Its activity is regulated as follows. Allosterically activated by GTP. Catalyzes the conversion of uracil and 5-phospho-alpha-D-ribose 1-diphosphate (PRPP) to UMP and diphosphate. This is Uracil phosphoribosyltransferase from Pectobacterium carotovorum subsp. carotovorum (strain PC1).